A 206-amino-acid polypeptide reads, in one-letter code: Protein-methionine-sulfoxide reductase heme-binding subunit MsrQ (206 aa).

Transmembrane regions (helical) follow at residues 14–34, 45–65, 82–102, 118–138, 149–169, and 179–199; these read IKPL…WLGA, FLTR…LAIT, MCGL…VWWD, PFIT…ATST, WQVL…HFWW, and QPLL…AAWW.

The protein belongs to the MsrQ family. In terms of assembly, heterodimer of a catalytic subunit (MsrP) and a heme-binding subunit (MsrQ). FMN is required as a cofactor. The cofactor is heme b.

The protein resides in the cell inner membrane. Its function is as follows. Part of the MsrPQ system that repairs oxidized periplasmic proteins containing methionine sulfoxide residues (Met-O), using respiratory chain electrons. Thus protects these proteins from oxidative-stress damage caused by reactive species of oxygen and chlorine generated by the host defense mechanisms. MsrPQ is essential for the maintenance of envelope integrity under bleach stress, rescuing a wide series of structurally unrelated periplasmic proteins from methionine oxidation. MsrQ provides electrons for reduction to the reductase catalytic subunit MsrP, using the quinone pool of the respiratory chain. In Bordetella bronchiseptica (strain ATCC BAA-588 / NCTC 13252 / RB50) (Alcaligenes bronchisepticus), this protein is Protein-methionine-sulfoxide reductase heme-binding subunit MsrQ.